The sequence spans 532 residues: UDP-glucuronosyltransferase 1A6 (532 aa).

The first 26 residues, 1–26 (MACLLRSFQRISAGVFFLALWGMVVG), serve as a signal peptide directing secretion. Residues N294 and N346 are each glycosylated (N-linked (GlcNAc...) asparagine). A helical membrane pass occupies residues 490 to 506 (VIGFLLAVVLTVAFITF).

The protein belongs to the UDP-glycosyltransferase family. Isoform 1 interacts with isoform 3/i2 suggesting that oligomerization is involved in negative regulation of transferase activity by isoform 3. Isoform 1 also interacts with respective i2 isoforms of UGT1A1, UGT1A3, UGT1A4, UGT1A7, UGT1A8, UGT1A9 and UGT1A10. Expressed in skin. Isoforms 1 and 3 are expressed in kidney and liver. Isoform 1 but not isoform 2 is expressed in colon, esophagus and small intestine.

The protein resides in the microsome. The protein localises to the endoplasmic reticulum membrane. The enzyme catalyses glucuronate acceptor + UDP-alpha-D-glucuronate = acceptor beta-D-glucuronoside + UDP + H(+). It catalyses the reaction (5Z,8Z,11Z,14Z)-eicosatetraenoate + UDP-alpha-D-glucuronate = O-[(5Z),(8Z),(11Z),(14Z)-eicosatetraenoyl]-beta-D-glucuronate + UDP. It carries out the reaction 15-hydroxy-(5Z,8Z,11Z,13E)-eicosatetraenoate + UDP-alpha-D-glucuronate = 15-O-(beta-D-glucuronosyl)-(5Z,8Z,11Z,14Z)-eicosatetraenoate + UDP + H(+). The catalysed reaction is (E)-ferulate + UDP-alpha-D-glucuronate = (E)-4-O-(beta-D-glucuronosyl)-ferulate + UDP + H(+). The enzyme catalyses (E)-ferulate + UDP-alpha-D-glucuronate = (E)-ferulic acid beta-D-glucuronate ester + UDP. Functionally, UDP-glucuronosyltransferase (UGT) that catalyzes phase II biotransformation reactions in which lipophilic substrates are conjugated with glucuronic acid to facilitate their inactivation and excretion from the body. Essential for the elimination and detoxification of drugs, xenobiotics and endogenous compounds. Involved in the glucuronidation of arachidonic acid (AA) and AA-derived eicosanoids including 15-HETE and 20-HETE. Conjugates small planar phenolic molecules such as 4-nitrophenol, 1-naphthol, and 4-methylumbelliferone. The bulky phenol 4-hydroxybiphenyl, androgens and estrogens are not substrates. 2-hydroxybiphenyl is an excellent substrate. Involved in the glucuronidation of the phytochemical ferulic acid at the phenolic or the carboxylic acid group. Isoform 3 lacks transferase activity but acts as a negative regulator of isoform 1. The polypeptide is UDP-glucuronosyltransferase 1A6 (Homo sapiens (Human)).